The primary structure comprises 296 residues: Phosphatidylserine decarboxylase proenzyme (296 aa).

Catalysis depends on charge relay system; for autoendoproteolytic cleavage activity residues Asp-113, His-169, and Ser-256. Residue Ser-256 is the Schiff-base intermediate with substrate; via pyruvic acid; for decarboxylase activity of the active site. Ser-256 bears the Pyruvic acid (Ser); by autocatalysis mark.

It belongs to the phosphatidylserine decarboxylase family. PSD-B subfamily. Prokaryotic type II sub-subfamily. In terms of assembly, heterodimer of a large membrane-associated beta subunit and a small pyruvoyl-containing alpha subunit. It depends on pyruvate as a cofactor. Post-translationally, is synthesized initially as an inactive proenzyme. Formation of the active enzyme involves a self-maturation process in which the active site pyruvoyl group is generated from an internal serine residue via an autocatalytic post-translational modification. Two non-identical subunits are generated from the proenzyme in this reaction, and the pyruvate is formed at the N-terminus of the alpha chain, which is derived from the carboxyl end of the proenzyme. The autoendoproteolytic cleavage occurs by a canonical serine protease mechanism, in which the side chain hydroxyl group of the serine supplies its oxygen atom to form the C-terminus of the beta chain, while the remainder of the serine residue undergoes an oxidative deamination to produce ammonia and the pyruvoyl prosthetic group on the alpha chain. During this reaction, the Ser that is part of the protease active site of the proenzyme becomes the pyruvoyl prosthetic group, which constitutes an essential element of the active site of the mature decarboxylase.

It localises to the cell membrane. It catalyses the reaction a 1,2-diacyl-sn-glycero-3-phospho-L-serine + H(+) = a 1,2-diacyl-sn-glycero-3-phosphoethanolamine + CO2. It participates in phospholipid metabolism; phosphatidylethanolamine biosynthesis; phosphatidylethanolamine from CDP-diacylglycerol: step 2/2. Catalyzes the formation of phosphatidylethanolamine (PtdEtn) from phosphatidylserine (PtdSer). The sequence is that of Phosphatidylserine decarboxylase proenzyme from Clostridium botulinum (strain Alaska E43 / Type E3).